We begin with the raw amino-acid sequence, 572 residues long: Phosphoenolpyruvate-protein phosphotransferase (572 aa).

His-191 (tele-phosphohistidine intermediate) is an active-site residue. Residues Arg-298 and Arg-334 each contribute to the phosphoenolpyruvate site. Mg(2+) contacts are provided by Glu-433 and Asp-457. Phosphoenolpyruvate contacts are provided by residues 456-457 (ND) and Arg-467. Cys-504 functions as the Proton donor in the catalytic mechanism.

Belongs to the PEP-utilizing enzyme family. As to quaternary structure, homodimer. It depends on Mg(2+) as a cofactor.

The protein resides in the cytoplasm. It carries out the reaction L-histidyl-[protein] + phosphoenolpyruvate = N(pros)-phospho-L-histidyl-[protein] + pyruvate. In terms of biological role, general (non sugar-specific) component of the phosphoenolpyruvate-dependent sugar phosphotransferase system (sugar PTS). This major carbohydrate active-transport system catalyzes the phosphorylation of incoming sugar substrates concomitantly with their translocation across the cell membrane. Enzyme I transfers the phosphoryl group from phosphoenolpyruvate (PEP) to the phosphoryl carrier protein (HPr). This Staphylococcus aureus (strain Mu50 / ATCC 700699) protein is Phosphoenolpyruvate-protein phosphotransferase (ptsI).